The chain runs to 401 residues: MPICEFSATSKSRKIDVHAHVLPKNIPDFQEKFGYPGFVRLDHKEDGTTHMVKDGKLFRVVEPNCFDTETRIADMNRANVNVQCLSTVPVMFSYWAKPADTEIVARFVNDDLLAECQKFPDRLVPLGTLPMNDVQRAVEIFGKRIFFFEIWSPAKKSPEEVKRCVSMGIKGFEVGSHVAEKSLDHRDFWPLYKLTESFKLSTIMPGFCEFFENWGLTTKTPGICEELSVVLFVHPWDMHMWDGRLDKYWMPWLVGMPSETAQAICSVLMGNILVLFPKLKLCFAHGGGAYPQIRGRVSHGWNVRPDLCAGKCKVAPNKLDGLLWTDSLVHDPKALELLINTVGKEHIVLGTDYPFPLGELEVGRVVEEYKPFSAKDREDLLWKNAVKMLDIDENLLFNKDF.

Residues histidine 18 and histidine 20 each coordinate Zn(2+). Substrate is bound at residue arginine 59. Histidine 234 and aspartate 352 together coordinate Zn(2+).

This sequence belongs to the metallo-dependent hydrolases superfamily. ACMSD family. As to quaternary structure, monomer.

The catalysed reaction is 2-amino-3-carboxymuconate 6-semialdehyde + H(+) = 2-aminomuconate 6-semialdehyde + CO2. Its pathway is secondary metabolite metabolism; quinolate metabolism. In terms of biological role, converts alpha-amino-beta-carboxymuconate-epsilon-semialdehyde (ACMS) to alpha-aminomuconate semialdehyde (AMS). The protein is 2-amino-3-carboxymuconate-6-semialdehyde decarboxylase of Caenorhabditis elegans.